The chain runs to 419 residues: rRNA methyltransferase 3, mitochondrial (419 aa).

The transit peptide at 1 to 39 directs the protein to the mitochondrion; the sequence is MAALCGGMLRGCILKPLGLSGSLQLKRNVRALRRTPVRV. The segment at 42 to 68 is disordered; that stretch reads ADEEGRERKQVEASRQRQPRQNESQAC. Residues 44-56 are compositionally biased toward basic and acidic residues; the sequence is EEGRERKQVEASR. Gly-357, Ile-381, and Leu-390 together coordinate S-adenosyl-L-methionine.

Belongs to the class IV-like SAM-binding methyltransferase superfamily. RNA methyltransferase TrmH family.

Its subcellular location is the mitochondrion. The enzyme catalyses a uridine in rRNA + S-adenosyl-L-methionine = a 2'-O-methyluridine in rRNA + S-adenosyl-L-homocysteine + H(+). S-adenosyl-L-methionine-dependent 2'-O-ribose methyltransferase that catalyzes the formation of 2'-O-methylguanosine at position 1370 (Gm1370) in the mitochondrial large subunit ribosomal RNA (mtLSU rRNA), a conserved modification in the peptidyl transferase domain of the mtLSU rRNA. Also required for formation of 2'-O-methyluridine at position 1369 (Um1369) mediated by MRM2. The sequence is that of rRNA methyltransferase 3, mitochondrial from Xenopus laevis (African clawed frog).